Reading from the N-terminus, the 784-residue chain is Homeobox-leucine zipper protein ROC2 (784 aa).

The interval 60 to 113 (AESGDNMIRSRASDPLGGDEFESKSGSENVDGVSVDDQDPNQRPRKKRYHRHTQ) is disordered. Over residues 102–113 (RPRKKRYHRHTQ) the composition is skewed to basic residues. Positions 104–163 (RKKRYHRHTQHQIQEMEAFFKECPHPDDKQRKELSRELGLEPLQVKFWFQNKRTQMKNQH) form a DNA-binding region, homeobox. The stretch at 158 to 234 (QMKNQHERHE…DRISAIAAKY (77 aa)) forms a coiled coil. The START domain occupies 286 to 523 (SEVDKPMIVE…LDRQCERLAS (238 aa)).

It belongs to the HD-ZIP homeobox family. Class IV subfamily.

It localises to the nucleus. In terms of biological role, probable transcription factor. This chain is Homeobox-leucine zipper protein ROC2 (ROC2), found in Oryza sativa subsp. japonica (Rice).